A 139-amino-acid chain; its full sequence is MNFKTALICFALLLIGTLCSAYSNQERQRDSRRVAEIMRTSLDDNTKIHRIQELLTIYNRMAPSLRPDERARIDRFISRHTEGIMVDGVPSQGGARKIFKKTLSPAAKSVATGFFTELGASLASLFTSWFPATTTERNH.

Positions 1-21 (MNFKTALICFALLLIGTLCSA) are cleaved as a signal peptide.

It belongs to the Turandot family.

It is found in the secreted. In terms of biological role, a humoral factor that may play a role in stress tolerance. This Drosophila simulans (Fruit fly) protein is Protein Turandot B.